The following is a 154-amino-acid chain: Crossover junction endodeoxyribonuclease RuvC (154 aa).

Residues D7, E66, and D139 contribute to the active site. Residues D7, E66, and D139 each contribute to the Mg(2+) site.

It belongs to the RuvC family. Homodimer which binds Holliday junction (HJ) DNA. The HJ becomes 2-fold symmetrical on binding to RuvC with unstacked arms; it has a different conformation from HJ DNA in complex with RuvA. In the full resolvosome a probable DNA-RuvA(4)-RuvB(12)-RuvC(2) complex forms which resolves the HJ. The cofactor is Mg(2+).

Its subcellular location is the cytoplasm. It carries out the reaction Endonucleolytic cleavage at a junction such as a reciprocal single-stranded crossover between two homologous DNA duplexes (Holliday junction).. Functionally, the RuvA-RuvB-RuvC complex processes Holliday junction (HJ) DNA during genetic recombination and DNA repair. Endonuclease that resolves HJ intermediates. Cleaves cruciform DNA by making single-stranded nicks across the HJ at symmetrical positions within the homologous arms, yielding a 5'-phosphate and a 3'-hydroxyl group; requires a central core of homology in the junction. The consensus cleavage sequence is 5'-(A/T)TT(C/G)-3'. Cleavage occurs on the 3'-side of the TT dinucleotide at the point of strand exchange. HJ branch migration catalyzed by RuvA-RuvB allows RuvC to scan DNA until it finds its consensus sequence, where it cleaves and resolves the cruciform DNA. The chain is Crossover junction endodeoxyribonuclease RuvC from Aliarcobacter butzleri (strain RM4018) (Arcobacter butzleri).